The primary structure comprises 132 residues: Small ribosomal subunit protein uS8 (132 aa).

Belongs to the universal ribosomal protein uS8 family. As to quaternary structure, part of the 30S ribosomal subunit. Contacts proteins S5 and S12.

One of the primary rRNA binding proteins, it binds directly to 16S rRNA central domain where it helps coordinate assembly of the platform of the 30S subunit. The protein is Small ribosomal subunit protein uS8 of Kocuria rhizophila (strain ATCC 9341 / DSM 348 / NBRC 103217 / DC2201).